Consider the following 156-residue polypeptide: Small ribosomal subunit protein uS7 (156 aa).

It belongs to the universal ribosomal protein uS7 family. As to quaternary structure, part of the 30S ribosomal subunit. Contacts proteins S9 and S11.

Functionally, one of the primary rRNA binding proteins, it binds directly to 16S rRNA where it nucleates assembly of the head domain of the 30S subunit. Is located at the subunit interface close to the decoding center, probably blocks exit of the E-site tRNA. The sequence is that of Small ribosomal subunit protein uS7 from Prochlorococcus marinus subsp. pastoris (strain CCMP1986 / NIES-2087 / MED4).